A 343-amino-acid polypeptide reads, in one-letter code: Phenylalanine--tRNA ligase alpha subunit (343 aa).

Glutamate 256 contacts Mg(2+).

It belongs to the class-II aminoacyl-tRNA synthetase family. Phe-tRNA synthetase alpha subunit type 1 subfamily. Tetramer of two alpha and two beta subunits. Requires Mg(2+) as cofactor.

Its subcellular location is the cytoplasm. The enzyme catalyses tRNA(Phe) + L-phenylalanine + ATP = L-phenylalanyl-tRNA(Phe) + AMP + diphosphate + H(+). In Phytoplasma australiense, this protein is Phenylalanine--tRNA ligase alpha subunit.